Here is a 532-residue protein sequence, read N- to C-terminus: Bifunctional purine biosynthesis protein PurH (532 aa).

Residues 1 to 149 enclose the MGS-like domain; the sequence is MTDPAPLTRA…KNHGAVTVLT (149 aa).

It belongs to the PurH family.

The enzyme catalyses (6R)-10-formyltetrahydrofolate + 5-amino-1-(5-phospho-beta-D-ribosyl)imidazole-4-carboxamide = 5-formamido-1-(5-phospho-D-ribosyl)imidazole-4-carboxamide + (6S)-5,6,7,8-tetrahydrofolate. It catalyses the reaction IMP + H2O = 5-formamido-1-(5-phospho-D-ribosyl)imidazole-4-carboxamide. It participates in purine metabolism; IMP biosynthesis via de novo pathway; 5-formamido-1-(5-phospho-D-ribosyl)imidazole-4-carboxamide from 5-amino-1-(5-phospho-D-ribosyl)imidazole-4-carboxamide (10-formyl THF route): step 1/1. It functions in the pathway purine metabolism; IMP biosynthesis via de novo pathway; IMP from 5-formamido-1-(5-phospho-D-ribosyl)imidazole-4-carboxamide: step 1/1. In Jannaschia sp. (strain CCS1), this protein is Bifunctional purine biosynthesis protein PurH.